We begin with the raw amino-acid sequence, 233 residues long: Probable fimbrial chaperone protein ElfD (233 aa).

The N-terminal stretch at 1–26 is a signal peptide; that stretch reads MKTCITKGIVTVSLTAILLSCSSAWA.

This sequence belongs to the periplasmic pilus chaperone family.

It is found in the periplasm. Its function is as follows. Part of the elfADCG-ycbUVF fimbrial operon, which promotes adhesion of bacteria to different abiotic surfaces. Could be required for the biogenesis of the ElfA fimbriae. This is Probable fimbrial chaperone protein ElfD (elfD) from Escherichia coli (strain K12).